Reading from the N-terminus, the 309-residue chain is Foldase protein PrsA (309 aa).

The first 22 residues, 1 to 22 (MKTRSKLAAGFLTLMSVATLAA), serve as a signal peptide directing secretion. Residue Cys-23 is the site of N-palmitoyl cysteine attachment. A lipid anchor (S-diacylglycerol cysteine) is attached at Cys-23. The region spanning 146–241 (TPETSVQVIK…TSYYIIKVTD (96 aa)) is the PpiC domain.

This sequence belongs to the PrsA family.

The protein localises to the cell membrane. It carries out the reaction [protein]-peptidylproline (omega=180) = [protein]-peptidylproline (omega=0). Plays a major role in protein secretion by helping the post-translocational extracellular folding of several secreted proteins. This chain is Foldase protein PrsA, found in Streptococcus agalactiae serotype III (strain NEM316).